The following is a 901-amino-acid chain: Protein translocase subunit SecA (901 aa).

ATP contacts are provided by residues Gln89, 107–111 (GEGKT), and Asp502. A disordered region spans residues 838 to 883 (YQQQQAETEAQMHPEHEEAEGGEVSGRVAGFDETDPTTWGNPSRND). Residues Cys885, Cys887, Cys896, and His897 each coordinate Zn(2+).

It belongs to the SecA family. Monomer and homodimer. Part of the essential Sec protein translocation apparatus which comprises SecA, SecYEG and auxiliary proteins SecDF-YajC and YidC. It depends on Zn(2+) as a cofactor.

It is found in the cell inner membrane. Its subcellular location is the cytoplasm. The enzyme catalyses ATP + H2O + cellular proteinSide 1 = ADP + phosphate + cellular proteinSide 2.. Functionally, part of the Sec protein translocase complex. Interacts with the SecYEG preprotein conducting channel. Has a central role in coupling the hydrolysis of ATP to the transfer of proteins into and across the cell membrane, serving both as a receptor for the preprotein-SecB complex and as an ATP-driven molecular motor driving the stepwise translocation of polypeptide chains across the membrane. The polypeptide is Protein translocase subunit SecA (Paracoccus denitrificans (strain Pd 1222)).